Here is a 332-residue protein sequence, read N- to C-terminus: Probable xyloglucan endotransglucosylase/hydrolase protein 28 (332 aa).

Residues 1–22 (MGFITRFLVFMSLFTSLVSGFA) form the signal peptide. Residues 23 to 223 (LQKLPLIQFD…YKYAPYVSQF (201 aa)) enclose the GH16 domain. Residue Glu-108 is the Nucleophile of the active site. Glu-112 functions as the Proton donor in the catalytic mechanism. Xyloglucan contacts are provided by residues Glu-112 and 125–127 (QTN). Residue Asn-131 is glycosylated (N-linked (GlcNAc...) asparagine). Residues 135-139 (HLGRE), 202-203 (KW), Gly-207, and Arg-282 each bind xyloglucan. A disulfide bond links Cys-277 and Cys-290. The span at 313–326 (HGHRRGKHRSRSRL) shows a compositional bias: basic residues. The interval 313-332 (HGHRRGKHRSRSRLARTESI) is disordered.

The protein belongs to the glycosyl hydrolase 16 family. XTH group 3 subfamily. Contains at least one intrachain disulfide bond essential for its enzymatic activity. As to expression, expressed in 7 day old seedlings, roots, rosette leaves, internodes between nodes bearing axillary shoots, nodes bearing flowers, flower buds and siliques.

The protein localises to the secreted. Its subcellular location is the cell wall. It localises to the extracellular space. It is found in the apoplast. It carries out the reaction breaks a beta-(1-&gt;4) bond in the backbone of a xyloglucan and transfers the xyloglucanyl segment on to O-4 of the non-reducing terminal glucose residue of an acceptor, which can be a xyloglucan or an oligosaccharide of xyloglucan.. Functionally, catalyzes xyloglucan endohydrolysis (XEH) and/or endotransglycosylation (XET). Cleaves and religates xyloglucan polymers, an essential constituent of the primary cell wall, and thereby participates in cell wall construction of growing tissues. The chain is Probable xyloglucan endotransglucosylase/hydrolase protein 28 (XTH28) from Arabidopsis thaliana (Mouse-ear cress).